Reading from the N-terminus, the 598-residue chain is Membrane protein insertase YidC (598 aa).

Residues 7–27 (NYFIAIALSVLIVLGWQFLYM) form a helical membrane-spanning segment. The tract at residues 37 to 76 (AQEAQKAQQQTEQVQQPAAGGQTPAQTSGAAPSGQAAATA) is disordered. A compositionally biased stretch (low complexity) spans 40–76 (AQKAQQQTEQVQQPAAGGQTPAQTSGAAPSGQAAATA). Helical transmembrane passes span 377-397 (FGVAILCTTIVVKALFFPLAS), 447-467 (WPVALQIPIFFSLYKVIYITI), 492-512 (LFGLLPFEGPTLLHLGVWPLI), and 538-558 (WMPLVFMFMLASFPAGLVIYW).

It belongs to the OXA1/ALB3/YidC family. Type 1 subfamily. As to quaternary structure, interacts with the Sec translocase complex via SecD. Specifically interacts with transmembrane segments of nascent integral membrane proteins during membrane integration.

The protein localises to the cell inner membrane. In terms of biological role, required for the insertion and/or proper folding and/or complex formation of integral membrane proteins into the membrane. Involved in integration of membrane proteins that insert both dependently and independently of the Sec translocase complex, as well as at least some lipoproteins. Aids folding of multispanning membrane proteins. This Rhizobium johnstonii (strain DSM 114642 / LMG 32736 / 3841) (Rhizobium leguminosarum bv. viciae) protein is Membrane protein insertase YidC.